The following is a 331-amino-acid chain: Probable allantoicase (331 aa).

The protein belongs to the allantoicase family.

It catalyses the reaction allantoate + H2O = (S)-ureidoglycolate + urea. Its pathway is nitrogen metabolism; (S)-allantoin degradation; (S)-ureidoglycolate from allantoate (aminidohydrolase route): step 1/1. The polypeptide is Probable allantoicase (Pseudomonas savastanoi pv. phaseolicola (strain 1448A / Race 6) (Pseudomonas syringae pv. phaseolicola (strain 1448A / Race 6))).